A 353-amino-acid polypeptide reads, in one-letter code: UPF0421 protein YgaE (353 aa).

Helical transmembrane passes span 20 to 40, 67 to 87, 103 to 123, and 125 to 145; these read LASW…IFAI, VFGL…VIVI, LVTV…FALI, and TSTV…FLPP.

Belongs to the UPF0421 family.

The protein resides in the cell membrane. The chain is UPF0421 protein YgaE (ygaE) from Bacillus subtilis (strain 168).